The primary structure comprises 1039 residues: Translation initiation factor IF-2 (1039 aa).

2 disordered regions span residues 39-347 (TISE…KWQE) and 400-452 (ARPP…PEKV). The span at 103-125 (RNTTSNAPEASVANNQIASSEAN) shows a compositional bias: polar residues. Over residues 157–176 (PQKPAAPEAEPEAQSQAPAK) the composition is skewed to low complexity. 2 stretches are compositionally biased toward basic and acidic residues: residues 178-197 (AVEKPEKSAQPRPGKPERQP) and 226-243 (PILKRDRPRREDERDQAK). Residues 408–423 (ARSASAATAAPISSPT) are compositionally biased toward low complexity. Residues 432 to 451 (NNRDQNRRQETEVKRERPEK) are compositionally biased toward basic and acidic residues. The tr-type G domain occupies 533–706 (RRPPVVTIMG…LLVAEVGELS (174 aa)). Residues 542–549 (GHVDHGKT) are G1. 542–549 (GHVDHGKT) contributes to the GTP binding site. Residues 567–571 (GITQH) form a G2 region. The segment at 592-595 (DTPG) is G3. Residues 592–596 (DTPGH) and 646–649 (NKID) each bind GTP. Residues 646–649 (NKID) form a G4 region. The segment at 682–684 (SAI) is G5.

It belongs to the TRAFAC class translation factor GTPase superfamily. Classic translation factor GTPase family. IF-2 subfamily.

The protein localises to the cytoplasm. In terms of biological role, one of the essential components for the initiation of protein synthesis. Protects formylmethionyl-tRNA from spontaneous hydrolysis and promotes its binding to the 30S ribosomal subunits. Also involved in the hydrolysis of GTP during the formation of the 70S ribosomal complex. The chain is Translation initiation factor IF-2 from Nostoc sp. (strain PCC 7120 / SAG 25.82 / UTEX 2576).